Consider the following 473-residue polypeptide: 3-isopropylmalate dehydratase large subunit (473 aa).

Positions 354, 414, and 417 each coordinate [4Fe-4S] cluster.

Belongs to the aconitase/IPM isomerase family. LeuC type 1 subfamily. In terms of assembly, heterodimer of LeuC and LeuD. The cofactor is [4Fe-4S] cluster.

The enzyme catalyses (2R,3S)-3-isopropylmalate = (2S)-2-isopropylmalate. Its pathway is amino-acid biosynthesis; L-leucine biosynthesis; L-leucine from 3-methyl-2-oxobutanoate: step 2/4. Functionally, catalyzes the isomerization between 2-isopropylmalate and 3-isopropylmalate, via the formation of 2-isopropylmaleate. In Mycobacterium bovis (strain ATCC BAA-935 / AF2122/97), this protein is 3-isopropylmalate dehydratase large subunit.